The chain runs to 101 residues: Protein Tat (101 aa).

The tract at residues 1–20 (MEPVDPSLEPWKHPGSQPKT) is disordered. Positions 1–24 (MEPVDPSLEPWKHPGSQPKTACTN) are interaction with human CREBBP. The segment at 1–48 (MEPVDPSLEPWKHPGSQPKTACTNCYCKKCCLHCQVCFTTKGLGISYG) is transactivation. Zn(2+)-binding residues include C22, C25, and C27. Positions 22-37 (CTNCYCKKCCLHCQVC) are cysteine-rich. An N6-acetyllysine; by host PCAF modification is found at K28. Zn(2+) contacts are provided by C30, H33, C34, and C37. The core stretch occupies residues 38-48 (FTTKGLGISYG). The tract at residues 45–101 (ISYGRKKRRQRRRPPQDSQTHQVSLPKQPSSQQRGDPTGPKESKKKVERETETDPDN) is disordered. Residues 48–57 (GRKKRRQRRR) show a composition bias toward basic residues. The short motif at 49–57 (RKKRRQRRR) is the Nuclear localization signal, RNA-binding (TAR), and protein transduction element. The tract at residues 49–86 (RKKRRQRRRPPQDSQTHQVSLPKQPSSQQRGDPTGPKE) is interaction with the host capping enzyme RNGTT. An N6-acetyllysine; by host EP300 and GCN5L2 mark is found at K50 and K51. Residues R52 and R53 each carry the asymmetric dimethylarginine; by host PRMT6 modification. Polar residues predominate over residues 61-79 (DSQTHQVSLPKQPSSQQRG). Residue K71 forms a Glycyl lysine isopeptide (Lys-Gly) (interchain with G-Cter in ubiquitin) linkage. Positions 78-80 (RGD) match the Cell attachment site motif. Basic and acidic residues predominate over residues 83–101 (GPKESKKKVERETETDPDN).

The protein belongs to the lentiviruses Tat family. In terms of assembly, interacts with host CCNT1. Associates with the P-TEFb complex composed at least of Tat, P-TEFb (CDK9 and CCNT1), TAR RNA, RNA Pol II. Recruits the HATs CREBBP, TAF1/TFIID, EP300, PCAF and GCN5L2. Interacts with host KAT5/Tip60; this interaction targets the latter to degradation. Interacts with the host deacetylase SIRT1. Interacts with host capping enzyme RNGTT; this interaction stimulates RNGTT. Binds to host KDR, and to the host integrins ITGAV/ITGB3 and ITGA5/ITGB1. Interacts with host KPNB1/importin beta-1 without previous binding to KPNA1/importin alpha-1. Interacts with EIF2AK2. Interacts with host nucleosome assembly protein NAP1L1; this interaction may be required for the transport of Tat within the nucleus, since the two proteins interact at the nuclear rim. Interacts with host C1QBP/SF2P32; this interaction involves lysine-acetylated Tat. Interacts with the host chemokine receptors CCR2, CCR3 and CXCR4. Interacts with host DPP4/CD26; this interaction may trigger an anti-proliferative effect. Interacts with host LDLR. Interacts with the host extracellular matrix metalloproteinase MMP1. Interacts with host PRMT6; this interaction mediates Tat's methylation. Interacts with, and is ubiquitinated by MDM2/Hdm2. Interacts with host PSMC3 and HTATIP2. Interacts with STAB1; this interaction may overcome SATB1-mediated repression of IL2 and IL2RA (interleukin) in T cells by binding to the same domain than HDAC1. Interacts (when acetylated) with human CDK13, thereby increasing HIV-1 mRNA splicing and promoting the production of the doubly spliced HIV-1 protein Nef. Interacts with host TBP; this interaction modulates the activity of transcriptional pre-initiation complex. Interacts with host RELA. Interacts with host PLSCR1; this interaction negatively regulates Tat transactivation activity by altering its subcellular distribution. In terms of processing, asymmetrical arginine methylation by host PRMT6 seems to diminish the transactivation capacity of Tat and affects the interaction with host CCNT1. Post-translationally, acetylation by EP300, CREBBP, GCN5L2/GCN5 and PCAF regulates the transactivation activity of Tat. EP300-mediated acetylation of Lys-50 promotes dissociation of Tat from the TAR RNA through the competitive binding to PCAF's bromodomain. In addition, the non-acetylated Tat's N-terminus can also interact with PCAF. PCAF-mediated acetylation of Lys-28 enhances Tat's binding to CCNT1. Lys-50 is deacetylated by SIRT1. Polyubiquitination by host MDM2 does not target Tat to degradation, but activates its transactivation function and fosters interaction with CCNT1 and TAR RNA. In terms of processing, phosphorylated by EIF2AK2 on serine and threonine residues adjacent to the basic region important for TAR RNA binding and function. Phosphorylation of Tat by EIF2AK2 is dependent on the prior activation of EIF2AK2 by dsRNA.

It localises to the host nucleus. The protein resides in the host nucleolus. It is found in the host cytoplasm. The protein localises to the secreted. Transcriptional activator that increases RNA Pol II processivity, thereby increasing the level of full-length viral transcripts. Recognizes a hairpin structure at the 5'-LTR of the nascent viral mRNAs referred to as the transactivation responsive RNA element (TAR) and recruits the cyclin T1-CDK9 complex (P-TEFb complex) that will in turn hyperphosphorylate the RNA polymerase II to allow efficient elongation. The CDK9 component of P-TEFb and other Tat-activated kinases hyperphosphorylate the C-terminus of RNA Pol II that becomes stabilized and much more processive. Other factors such as HTATSF1/Tat-SF1, SUPT5H/SPT5, and HTATIP2 are also important for Tat's function. Besides its effect on RNA Pol II processivity, Tat induces chromatin remodeling of proviral genes by recruiting the histone acetyltransferases (HATs) CREBBP, EP300 and PCAF to the chromatin. This also contributes to the increase in proviral transcription rate, especially when the provirus integrates in transcriptionally silent region of the host genome. To ensure maximal activation of the LTR, Tat mediates nuclear translocation of NF-kappa-B by interacting with host RELA. Through its interaction with host TBP, Tat may also modulate transcription initiation. Tat can reactivate a latently infected cell by penetrating in it and transactivating its LTR promoter. In the cytoplasm, Tat is thought to act as a translational activator of HIV-1 mRNAs. In terms of biological role, extracellular circulating Tat can be endocytosed by surrounding uninfected cells via the binding to several surface receptors such as CD26, CXCR4, heparan sulfate proteoglycans (HSPG) or LDLR. Neurons are rarely infected, but they internalize Tat via their LDLR. Through its interaction with nuclear HATs, Tat is potentially able to control the acetylation-dependent cellular gene expression. Modulates the expression of many cellular genes involved in cell survival, proliferation or in coding for cytokines or cytokine receptors. Tat plays a role in T-cell and neurons apoptosis. Tat induced neurotoxicity and apoptosis probably contribute to neuroAIDS. Circulating Tat also acts as a chemokine-like and/or growth factor-like molecule that binds to specific receptors on the surface of the cells, affecting many cellular pathways. In the vascular system, Tat binds to ITGAV/ITGB3 and ITGA5/ITGB1 integrins dimers at the surface of endothelial cells and competes with bFGF for heparin-binding sites, leading to an excess of soluble bFGF. The polypeptide is Protein Tat (Homo sapiens (Human)).